The primary structure comprises 323 residues: Phosphopantothenate--cysteine ligase 2 (323 aa).

Belongs to the PPC synthetase family. Homodimer.

It carries out the reaction (R)-4'-phosphopantothenate + L-cysteine + CTP = N-[(R)-4-phosphopantothenoyl]-L-cysteine + CMP + diphosphate + H(+). The protein operates within cofactor biosynthesis; coenzyme A biosynthesis; CoA from (R)-pantothenate: step 2/5. Catalyzes the first step in the biosynthesis of coenzyme A from vitamin B5, where cysteine is conjugated to 4'-phosphopantothenate to form 4-phosphopantothenoylcysteine. This is Phosphopantothenate--cysteine ligase 2 from Oryza sativa subsp. japonica (Rice).